A 290-amino-acid chain; its full sequence is Sodium/potassium-transporting ATPase subunit beta-2 (290 aa).

Topologically, residues 1-39 (MVIQKEKKSCGQVVEEWKEFVWNPRTHQFMGRTGTSWAF) are cytoplasmic. Residues 40–67 (ILLFYLVFYGFLTAMFTLTMWVMLQTVS) traverse the membrane as a helical; Signal-anchor for type II membrane protein segment. Over 68 to 290 (DHTPKYQDRL…VAFKLRINKT (223 aa)) the chain is Extracellular. 2 N-linked (GlcNAc...) asparagine glycosylation sites follow: Asn-96 and Asn-118. Cysteines 129 and 150 form a disulfide. N-linked (GlcNAc...) asparagine glycans are attached at residues Asn-153 and Asn-159. Cys-160 and Cys-177 are oxidised to a cystine. 3 N-linked (GlcNAc...) asparagine glycosylation sites follow: Asn-193, Asn-197, and Asn-238. An immunoglobulin-like region spans residues 193 to 290 (NQSMNVTCAG…VAFKLRINKT (98 aa)). A disulfide bridge connects residues Cys-200 and Cys-261.

It belongs to the X(+)/potassium ATPases subunit beta family. The sodium/potassium-transporting ATPase is composed of a catalytic alpha subunit, an auxiliary non-catalytic beta subunit and an additional regulatory subunit. Interacts with BSG.

It localises to the cell membrane. In terms of biological role, this is the non-catalytic component of the active enzyme, which catalyzes the hydrolysis of ATP coupled with the exchange of Na(+) and K(+) ions across the plasma membrane. The exact function of the beta-2 subunit is not known. Functionally, mediates cell adhesion of neurons and astrocytes, and promotes neurite outgrowth. This chain is Sodium/potassium-transporting ATPase subunit beta-2 (ATP1B2), found in Ochotona curzoniae (Black-lipped pika).